Reading from the N-terminus, the 181-residue chain is Large ribosomal subunit protein uL5 (181 aa).

The protein belongs to the universal ribosomal protein uL5 family. As to quaternary structure, part of the 50S ribosomal subunit; part of the 5S rRNA/L5/L18/L25 subcomplex. Contacts the 5S rRNA and the P site tRNA. Forms a bridge to the 30S subunit in the 70S ribosome.

Its function is as follows. This is one of the proteins that bind and probably mediate the attachment of the 5S RNA into the large ribosomal subunit, where it forms part of the central protuberance. In the 70S ribosome it contacts protein S13 of the 30S subunit (bridge B1b), connecting the 2 subunits; this bridge is implicated in subunit movement. Contacts the P site tRNA; the 5S rRNA and some of its associated proteins might help stabilize positioning of ribosome-bound tRNAs. The sequence is that of Large ribosomal subunit protein uL5 from Picosynechococcus sp. (strain ATCC 27264 / PCC 7002 / PR-6) (Agmenellum quadruplicatum).